Here is a 163-residue protein sequence, read N- to C-terminus: Phosphopantetheine adenylyltransferase (163 aa).

Substrate is bound at residue Thr-10. ATP is bound by residues Thr-10 to Phe-11 and His-18. Residues Lys-42, Leu-74, and Arg-88 each coordinate substrate. ATP is bound by residues Gly-89 to Arg-91, Glu-99, and Asn-124 to Thr-130.

The protein belongs to the bacterial CoaD family. As to quaternary structure, homohexamer. The cofactor is Mg(2+).

The protein localises to the cytoplasm. It carries out the reaction (R)-4'-phosphopantetheine + ATP + H(+) = 3'-dephospho-CoA + diphosphate. It functions in the pathway cofactor biosynthesis; coenzyme A biosynthesis; CoA from (R)-pantothenate: step 4/5. Functionally, reversibly transfers an adenylyl group from ATP to 4'-phosphopantetheine, yielding dephospho-CoA (dPCoA) and pyrophosphate. This chain is Phosphopantetheine adenylyltransferase, found in Shewanella baltica (strain OS195).